A 198-amino-acid chain; its full sequence is dTTP/UTP pyrophosphatase (198 aa).

The Proton acceptor role is filled by D69.

Belongs to the Maf family. YhdE subfamily. A divalent metal cation serves as cofactor.

The protein resides in the cytoplasm. It catalyses the reaction dTTP + H2O = dTMP + diphosphate + H(+). The catalysed reaction is UTP + H2O = UMP + diphosphate + H(+). In terms of biological role, nucleoside triphosphate pyrophosphatase that hydrolyzes dTTP and UTP. May have a dual role in cell division arrest and in preventing the incorporation of modified nucleotides into cellular nucleic acids. The protein is dTTP/UTP pyrophosphatase of Idiomarina loihiensis (strain ATCC BAA-735 / DSM 15497 / L2-TR).